The sequence spans 334 residues: Thioredoxin reductase (334 aa).

Residues serine 10–alanine 13, isoleucine 39–alanine 40, glutamine 44, asparagine 53, valine 86, cysteine 143, aspartate 287, and arginine 294–alanine 296 each bind FAD. Cysteines 140 and 143 form a disulfide.

The protein belongs to the class-II pyridine nucleotide-disulfide oxidoreductase family. In terms of assembly, homodimer. The cofactor is FAD.

Its subcellular location is the cytoplasm. It carries out the reaction [thioredoxin]-dithiol + NADP(+) = [thioredoxin]-disulfide + NADPH + H(+). The polypeptide is Thioredoxin reductase (cys-9) (Neurospora crassa (strain ATCC 24698 / 74-OR23-1A / CBS 708.71 / DSM 1257 / FGSC 987)).